A 496-amino-acid polypeptide reads, in one-letter code: Cruciferin BnC2 (496 aa).

Positions 1-23 (MARLSSLLYFSITVLIFLHGSTA) are cleaved as a signal peptide. Intrachain disulfides connect cysteine 30/cysteine 63 and cysteine 106/cysteine 313. Cupin type-1 domains lie at 35–269 (LNAL…RTAQ) and 319–468 (DNLD…EEAR). Threonine 109 carries the phosphothreonine modification. The tract at residues 114-170 (SVFQPGSGSPFGEGQGQGQQGQGQGQGQGQGKGQQGQGKGQQGQSQGQQGQGQGFRD) is disordered. A compositionally biased stretch (gly residues) spans 122-154 (SPFGEGQGQGQQGQGQGQGQGQGKGQQGQGKGQ). At tyrosine 336 the chain carries Phosphotyrosine. Phosphoserine is present on serine 338. Threonine 432 carries the post-translational modification Phosphothreonine.

This sequence belongs to the 11S seed storage protein (globulins) family. Hexamer; each subunit is composed of an acidic and a basic chain derived from a single precursor and linked by a disulfide bond.

Functionally, this is a seed storage protein. This Brassica napus (Rape) protein is Cruciferin BnC2 (BnC2).